The chain runs to 416 residues: UDP-N-acetylglucosamine 1-carboxyvinyltransferase (416 aa).

22-23 (KN) contributes to the phosphoenolpyruvate binding site. Arginine 92 is a binding site for UDP-N-acetyl-alpha-D-glucosamine. Cysteine 116 (proton donor) is an active-site residue. The residue at position 116 (cysteine 116) is a 2-(S-cysteinyl)pyruvic acid O-phosphothioketal. The UDP-N-acetyl-alpha-D-glucosamine site is built by aspartate 304 and isoleucine 326.

It belongs to the EPSP synthase family. MurA subfamily.

The protein resides in the cytoplasm. It catalyses the reaction phosphoenolpyruvate + UDP-N-acetyl-alpha-D-glucosamine = UDP-N-acetyl-3-O-(1-carboxyvinyl)-alpha-D-glucosamine + phosphate. The protein operates within cell wall biogenesis; peptidoglycan biosynthesis. Cell wall formation. Adds enolpyruvyl to UDP-N-acetylglucosamine. In Solidesulfovibrio magneticus (strain ATCC 700980 / DSM 13731 / RS-1) (Desulfovibrio magneticus), this protein is UDP-N-acetylglucosamine 1-carboxyvinyltransferase.